The sequence spans 328 residues: Cytochrome c biogenesis protein CcsA (328 aa).

A run of 8 helical transmembrane segments spans residues 13–33 (ISFS…LVNL), 46–66 (GIII…IFSG), 73–93 (LYES…VSYF), 101–121 (LNAI…SGLL), 146–166 (MILG…LLVI), 234–254 (IISL…VWAN), 263–283 (WDPK…YLHI), and 295–315 (AIVA…VNLL).

This sequence belongs to the CcmF/CycK/Ccl1/NrfE/CcsA family. As to quaternary structure, may interact with Ccs1.

It is found in the plastid. The protein localises to the chloroplast thylakoid membrane. Its function is as follows. Required during biogenesis of c-type cytochromes (cytochrome c6 and cytochrome f) at the step of heme attachment. The protein is Cytochrome c biogenesis protein CcsA of Olimarabidopsis pumila (Dwarf rocket).